A 352-amino-acid polypeptide reads, in one-letter code: (2E,6E)-farnesyl diphosphate synthase (352 aa).

3 residues coordinate isopentenyl diphosphate: Lys43, Arg46, and His77. Residues Asp84 and Asp88 each coordinate Mg(2+). The DDXXD motif signature appears at 84-88 (DDLID). Arg94 provides a ligand contact to isopentenyl diphosphate. The DDXXD motif signature appears at 236–240 (DDVLG).

It belongs to the FPP/GGPP synthase family. Requires Mg(2+) as cofactor.

The catalysed reaction is isopentenyl diphosphate + dimethylallyl diphosphate = (2E)-geranyl diphosphate + diphosphate. The enzyme catalyses isopentenyl diphosphate + (2E)-geranyl diphosphate = (2E,6E)-farnesyl diphosphate + diphosphate. The protein operates within isoprenoid biosynthesis; geranyl diphosphate biosynthesis; geranyl diphosphate from dimethylallyl diphosphate and isopentenyl diphosphate: step 1/1. Its pathway is isoprenoid biosynthesis; farnesyl diphosphate biosynthesis; farnesyl diphosphate from geranyl diphosphate and isopentenyl diphosphate. In terms of biological role, catalyzes the sequential condensations of isopentenyl pyrophosphate (IPP) with dimethylallyl diphosphate (DMAPP) to yield geranyl diphosphate (GPP) and with GPP to yield (2E,6E)-farnesyl diphosphate (E,E-FPP). The sequence is that of (2E,6E)-farnesyl diphosphate synthase from Mycobacterium tuberculosis (strain ATCC 25618 / H37Rv).